The chain runs to 369 residues: Phospho-N-acetylmuramoyl-pentapeptide-transferase (369 aa).

10 helical membrane passes run 2-22 (IALL…TPLF), 55-75 (TVVV…MWMM), 86-106 (ALLL…DDFI), 122-142 (LVLQ…FPNA), 158-178 (IPWL…FVLW), 196-216 (LDGL…LMGI), 239-259 (PLDL…FLWW), 266-286 (IFMG…FAIL), 291-311 (LLLA…IIQV), and 348-368 (ILGG…WVVL).

Belongs to the glycosyltransferase 4 family. MraY subfamily. Mg(2+) is required as a cofactor.

The protein resides in the cell membrane. The catalysed reaction is UDP-N-acetyl-alpha-D-muramoyl-L-alanyl-gamma-D-glutamyl-meso-2,6-diaminopimeloyl-D-alanyl-D-alanine + di-trans,octa-cis-undecaprenyl phosphate = di-trans,octa-cis-undecaprenyl diphospho-N-acetyl-alpha-D-muramoyl-L-alanyl-D-glutamyl-meso-2,6-diaminopimeloyl-D-alanyl-D-alanine + UMP. Its pathway is cell wall biogenesis; peptidoglycan biosynthesis. Functionally, catalyzes the initial step of the lipid cycle reactions in the biosynthesis of the cell wall peptidoglycan: transfers peptidoglycan precursor phospho-MurNAc-pentapeptide from UDP-MurNAc-pentapeptide onto the lipid carrier undecaprenyl phosphate, yielding undecaprenyl-pyrophosphoryl-MurNAc-pentapeptide, known as lipid I. The sequence is that of Phospho-N-acetylmuramoyl-pentapeptide-transferase from Arthrobacter sp. (strain FB24).